Consider the following 150-residue polypeptide: MTNLFVRSGISFVDRSEVLTHIGNEMLAKGVVHDTWPQALIAREAEFPTGIMLEQHAIAIPHCEAIHAKSSAIYLLRPTNKVHFQQADDDNDVAVSLVIALIVENPQQQLKLLRCLFGKLQQPDIVETLITLPETQLKEYFTKYVLDSDE.

In terms of domain architecture, PTS EIIA type-2 spans 1 to 144; sequence MTNLFVRSGI…TQLKEYFTKY (144 aa). Residue H62 is the Tele-phosphohistidine intermediate of the active site. H62 carries the post-translational modification Phosphohistidine; by HPr.

Forms a complex with one each of subunit of GatA, GatB and 2 subunits of GatC.

It localises to the cytoplasm. In terms of biological role, the phosphoenolpyruvate-dependent sugar phosphotransferase system (sugar PTS), a major carbohydrate active transport system, catalyzes the phosphorylation of incoming sugar substrates concomitantly with their translocation across the cell membrane. The enzyme II complex composed of GatA, GatB and GatC is involved in galactitol transport. This Escherichia coli O157:H7 protein is PTS system galactitol-specific EIIA component (gatA).